A 343-amino-acid chain; its full sequence is MMLFRAVRHSDLNGVQSLSQRAGIGLTSFPNNLDQLRSRIARSVDTFDGKLARAQQGFLFVLEDTSANRVAGVSAIEVAVGLEEPFYNFRVQKTIRSSRELGIYKSIEALTLEQDQTGNSELCTLFLDPEYQKGRNGTFLSKARFLFIAAFRDIFSKTIFAEMRGVADEQGNSPFWNSLGQHFFGIPFSQADYLTGIGSKTFIAELMPLHPIYISLLSAEAQKVIGQVHEKTVPARAILEKEGLIYQGHIDIFDGGALLQAEIDRIRAVKESRLVSVSKAESVTRDDGVPCIVANQQFSEFRALLLNVVCDSNELFLTAAEMGALQVSDGDQVRLVSLFPKEN.

Leu125 is a succinyl-CoA binding site. His229 acts as the Proton donor in catalysis.

The protein belongs to the arginine N-succinyltransferase family.

It catalyses the reaction succinyl-CoA + L-arginine = N(2)-succinyl-L-arginine + CoA + H(+). It functions in the pathway amino-acid degradation; L-arginine degradation via AST pathway; L-glutamate and succinate from L-arginine: step 1/5. Functionally, catalyzes the transfer of succinyl-CoA to arginine to produce N(2)-succinylarginine. The protein is Arginine N-succinyltransferase of Photorhabdus laumondii subsp. laumondii (strain DSM 15139 / CIP 105565 / TT01) (Photorhabdus luminescens subsp. laumondii).